The following is a 455-amino-acid chain: tRNA modification GTPase MnmE (455 aa).

Residues arginine 24, glutamate 81, and lysine 120 each contribute to the (6S)-5-formyl-5,6,7,8-tetrahydrofolate site. Positions glycine 216 to glycine 378 constitute a TrmE-type G domain. A K(+)-binding site is contributed by asparagine 226. Residues asparagine 226–serine 231, threonine 245–threonine 251, aspartate 270–glycine 273, asparagine 335–aspartate 338, and serine 359–arginine 361 contribute to the GTP site. Serine 230 contacts Mg(2+). The K(+) site is built by threonine 245, isoleucine 247, and threonine 250. Threonine 251 serves as a coordination point for Mg(2+). Residue lysine 455 participates in (6S)-5-formyl-5,6,7,8-tetrahydrofolate binding.

This sequence belongs to the TRAFAC class TrmE-Era-EngA-EngB-Septin-like GTPase superfamily. TrmE GTPase family. As to quaternary structure, homodimer. Heterotetramer of two MnmE and two MnmG subunits. K(+) serves as cofactor.

The protein resides in the cytoplasm. In terms of biological role, exhibits a very high intrinsic GTPase hydrolysis rate. Involved in the addition of a carboxymethylaminomethyl (cmnm) group at the wobble position (U34) of certain tRNAs, forming tRNA-cmnm(5)s(2)U34. The protein is tRNA modification GTPase MnmE of Pseudomonas paraeruginosa (strain DSM 24068 / PA7) (Pseudomonas aeruginosa (strain PA7)).